The chain runs to 338 residues: Phosphate transport system permease protein PstC 1 (338 aa).

8 helical membrane passes run 19–39 (GGIG…VLVI), 93–113 (TSAI…LVIV), 123–143 (AVGI…GLWG), 144–164 (AMTF…HNAP), 181–201 (GMLV…ATTT), 232–252 (LPWV…RALG), 254–274 (TMAV…NIYA), and 295–315 (TNFA…ITLL). Residues 87 to 320 (IVGTLATSAI…VITLLTNVAA (234 aa)) form the ABC transmembrane type-1 domain.

It belongs to the binding-protein-dependent transport system permease family. CysTW subfamily.

It localises to the cell membrane. Its function is as follows. Part of the binding-protein-dependent transport system for phosphate; probably responsible for the translocation of the substrate across the membrane. The sequence is that of Phosphate transport system permease protein PstC 1 (pstC1) from Mycobacterium bovis (strain ATCC BAA-935 / AF2122/97).